A 287-amino-acid polypeptide reads, in one-letter code: ATP synthase gamma chain (287 aa).

The protein belongs to the ATPase gamma chain family. As to quaternary structure, F-type ATPases have 2 components, CF(1) - the catalytic core - and CF(0) - the membrane proton channel. CF(1) has five subunits: alpha(3), beta(3), gamma(1), delta(1), epsilon(1). CF(0) has three main subunits: a, b and c.

It is found in the cell inner membrane. Produces ATP from ADP in the presence of a proton gradient across the membrane. The gamma chain is believed to be important in regulating ATPase activity and the flow of protons through the CF(0) complex. In Escherichia fergusonii (strain ATCC 35469 / DSM 13698 / CCUG 18766 / IAM 14443 / JCM 21226 / LMG 7866 / NBRC 102419 / NCTC 12128 / CDC 0568-73), this protein is ATP synthase gamma chain.